The sequence spans 323 residues: Type II restriction enzyme BsoBI (323 aa).

Mg(2+)-binding residues include D212, E240, and K242.

Homodimer.

The enzyme catalyses Endonucleolytic cleavage of DNA to give specific double-stranded fragments with terminal 5'-phosphates.. Its function is as follows. A P subtype restriction enzyme that recognizes the double-stranded sequence 5'-CYCGRG-3' and cleaves after C-1. The protein is Type II restriction enzyme BsoBI of Geobacillus stearothermophilus (Bacillus stearothermophilus).